A 794-amino-acid polypeptide reads, in one-letter code: MSTVKPIDANTVHKICSGQVITDVASAVKELVENSLDSGATTIEIRFKNYGINSIEVVDNGSGIDAGDYESIGKKHFTSKITDFEDLEALQTFGFRGEALSSLCAVGQVIISTATQNEAPKGVQLNLDHEGSLKDKLTIPFQRGTSVMVNDLFCTLPVRRKLLEKNYKREFSKAISLLQAYATISTNKRFMVYHQTKNSGKLLQLSTNSNKDMKLNIMNVFGTKVSSSLIPWNDGIIEGYISRPHVGSTRASNERQMLFINRRLVNLPKIARVIQEVFKPYSMAQSPFFAINLRITNGTIDINVSPDKKSVFLSEEDSIIEFIKNSLQNLCESCGHAISCSRSQSIFSYSSQIPDSSGDSTDQELPQSIPATESETSDDSSFSYKRSPCKRKLVEATAQPAISTSVAEGASLAQVSKPLPERLQKDSMRRSSPLNEKVTASSERMKKKLALFASSTDTSMQKTIDSSFPLKQPINKPSSNPNNLLLNDPSPASTPVAKTINLNEIESVHNAESVSTLSSIPRTEQTSVANRIPSKTAALQKLKFFQSRPLDGLNKFSKKINISLSGVQKDIVRSDALLKFSNKIGVVHDISDENQEDHLNLTVHKADFLRMRVVGQFNRGFIVVVHGNNLFIIDQHASDEKFNYEHLKSNLVINSQDLVLPKRLDLAATEETVLIDHIDLIRRKGFGVAIDLNQRVGNRCTLLSVPTSKNVIFDTSDLLEIISVLSEHPQIDPFSSRLERMLASKACRSSVMIGRALTISEMNTIVRHLAELSKPWNCPHGRPTMRHLLRLKDI.

2 disordered regions span residues serine 351–tyrosine 384 and glycine 409–serine 442. Residues glutamine 352 to alanine 371 show a composition bias toward polar residues. A compositionally biased stretch (basic and acidic residues) spans leucine 419–arginine 429. The span at arginine 430–serine 442 shows a compositional bias: polar residues.

This sequence belongs to the DNA mismatch repair MutL/HexB family.

Functionally, this protein is involved in the repair of mismatches in DNA. In Schizosaccharomyces pombe (strain 972 / ATCC 24843) (Fission yeast), this protein is DNA mismatch repair protein pms1 (pms1).